A 141-amino-acid chain; its full sequence is Hemoglobin subunit alpha (141 aa).

The Globin domain occupies 2–141 (AFTACEKQTI…ICQELSSRYR (140 aa)). His-59 provides a ligand contact to O2. His-88 is a heme b binding site.

This sequence belongs to the globin family. In terms of assembly, heterotetramer of two alpha chains and two beta chains. In terms of tissue distribution, red blood cells.

Its function is as follows. Involved in oxygen transport from gills to the various peripheral tissues. The protein is Hemoglobin subunit alpha (HBA) of Mustelus griseus (Spotless smooth-hound).